A 619-amino-acid chain; its full sequence is DBH-like monooxygenase protein 2 (619 aa).

An N-terminal signal peptide occupies residues 1–21 (MACVLLFRLFLLLVLAAFSQG). The Extracellular portion of the chain corresponds to 22-594 (KRLGPTSPLR…LSGSNTATLR (573 aa)). Residues 40 to 156 (RAVFLRWDFD…DTMRVLAAYG (117 aa)) enclose the DOMON domain. Tyr209 is an active-site residue. 2 disulfide bridges follow: Cys211-Cys261 and Cys248-Cys271. Positions 241 and 242 each coordinate Cu cation. A glycan (N-linked (GlcNAc...) asparagine) is linked at Asn250. Positions 309, 390, and 392 each coordinate Cu cation. Disulfide bonds link Cys366–Cys481 and Cys444–Cys466. His390 is an active-site residue. Asn405 carries an N-linked (GlcNAc...) asparagine glycan. Met465 is a Cu cation binding site. Asn477 carries N-linked (GlcNAc...) asparagine glycosylation. The chain crosses the membrane as a helical span at residues 595-615 (PLPMIAVLFLQGSLSCLLAML). Residues 616–619 (QTGV) are Cytoplasmic-facing.

It belongs to the copper type II ascorbate-dependent monooxygenase family. The cofactor is Cu(2+). In terms of tissue distribution, expressed at low levels in thymus and testis.

The protein localises to the membrane. The protein is DBH-like monooxygenase protein 2 (Moxd2) of Mus musculus (Mouse).